The sequence spans 186 residues: Large ribosomal subunit protein uL22 (186 aa).

Belongs to the universal ribosomal protein uL22 family. Component of the large ribosomal subunit (LSU). Mature N.crassa ribosomes consist of a small (40S) and a large (60S) subunit. The 40S small subunit contains 1 molecule of ribosomal RNA (18S rRNA) and at least 32 different proteins. The large 60S subunit contains 3 rRNA molecules (26S, 5.8S and 5S rRNA) and at least 42 different proteins.

The protein localises to the cytoplasm. Functionally, component of the ribosome, a large ribonucleoprotein complex responsible for the synthesis of proteins in the cell. The small ribosomal subunit (SSU) binds messenger RNAs (mRNAs) and translates the encoded message by selecting cognate aminoacyl-transfer RNA (tRNA) molecules. The large subunit (LSU) contains the ribosomal catalytic site termed the peptidyl transferase center (PTC), which catalyzes the formation of peptide bonds, thereby polymerizing the amino acids delivered by tRNAs into a polypeptide chain. The nascent polypeptides leave the ribosome through a tunnel in the LSU and interact with protein factors that function in enzymatic processing, targeting, and the membrane insertion of nascent chains at the exit of the ribosomal tunnel. The protein is Large ribosomal subunit protein uL22 (rpl-17) of Neurospora crassa (strain ATCC 24698 / 74-OR23-1A / CBS 708.71 / DSM 1257 / FGSC 987).